The chain runs to 187 residues: Shikimate kinase (187 aa).

14–19 (TSGKST) contributes to the ATP binding site. Mg(2+) is bound at residue S18. D36, R60, and G82 together coordinate substrate. Position 120 (R120) interacts with ATP. Residue R147 coordinates substrate.

The protein belongs to the shikimate kinase family. In terms of assembly, monomer. Mg(2+) serves as cofactor.

Its subcellular location is the cytoplasm. The catalysed reaction is shikimate + ATP = 3-phosphoshikimate + ADP + H(+). Its pathway is metabolic intermediate biosynthesis; chorismate biosynthesis; chorismate from D-erythrose 4-phosphate and phosphoenolpyruvate: step 5/7. Functionally, catalyzes the specific phosphorylation of the 3-hydroxyl group of shikimic acid using ATP as a cosubstrate. In Chloroherpeton thalassium (strain ATCC 35110 / GB-78), this protein is Shikimate kinase.